We begin with the raw amino-acid sequence, 453 residues long: tRNA modification GTPase MnmE (453 aa).

3 residues coordinate (6S)-5-formyl-5,6,7,8-tetrahydrofolate: Arg22, Glu79, and Lys119. One can recognise a TrmE-type G domain in the interval 215-376 (GMKVVIAGRP…LKQHLKSLMG (162 aa)). Asn225 contacts K(+). Residues 225 to 230 (NAGKSS), 244 to 250 (TEIAGTT), 269 to 272 (DTAG), and 334 to 337 (NKAD) contribute to the GTP site. Position 229 (Ser229) interacts with Mg(2+). K(+)-binding residues include Thr244, Ile246, and Thr249. Thr250 lines the Mg(2+) pocket. Lys453 contributes to the (6S)-5-formyl-5,6,7,8-tetrahydrofolate binding site.

This sequence belongs to the TRAFAC class TrmE-Era-EngA-EngB-Septin-like GTPase superfamily. TrmE GTPase family. Homodimer. Heterotetramer of two MnmE and two MnmG subunits. K(+) is required as a cofactor.

It is found in the cytoplasm. Exhibits a very high intrinsic GTPase hydrolysis rate. Involved in the addition of a carboxymethylaminomethyl (cmnm) group at the wobble position (U34) of certain tRNAs, forming tRNA-cmnm(5)s(2)U34. This is tRNA modification GTPase MnmE from Shewanella baltica (strain OS185).